Consider the following 323-residue polypeptide: Ig gamma chain C region (323 aa).

Ig-like domains are found at residues 6 to 96, 114 to 213, and 222 to 318; these read PSVF…KTVA, PSVF…KTIS, and PKVY…KSIS.

In Oryctolagus cuniculus (Rabbit), this protein is Ig gamma chain C region.